The following is a 316-amino-acid chain: Cation efflux system protein CzcD (316 aa).

Transmembrane regions (helical) follow at residues 17–37 (LKIA…GGVM), 47–67 (AAHM…IAIA), 82–102 (FEIL…IYIL), 115–135 (IEST…LISM), 152–172 (YLEV…AIII), and 174–194 (FTGW…WVLP).

It belongs to the cation diffusion facilitator (CDF) transporter (TC 2.A.4) family. SLC30A subfamily.

It is found in the cell membrane. In terms of biological role, necessary for activation of the czc determinant. The sequence is that of Cation efflux system protein CzcD (czcD) from Alcaligenes sp. (strain CT14).